Here is a 403-residue protein sequence, read N- to C-terminus: Metacaspase-1A (403 aa).

The tract at residues 1–93 (MQHHHHSSYG…PPTDPVAFGH (93 aa)) is disordered. Residues 18 to 31 (GQAYRQQQPYYGQP) show a composition bias toward low complexity. Residues 32–55 (SPQPYAQPPPPNYQRPSGYGPPPS) show a composition bias toward pro residues. Residues histidine 194 and cysteine 250 contribute to the active site.

It belongs to the peptidase C14B family.

In terms of biological role, involved in cell death (apoptosis). The sequence is that of Metacaspase-1A (casA) from Aspergillus terreus (strain NIH 2624 / FGSC A1156).